Consider the following 1128-residue polypeptide: DNA-directed RNA polymerase subunit Rpo2 (1128 aa).

DsDNA-binding positions include K178, 181–182, K206, 435–439, and 1027–1032; these read SN, RGQPN, and RFGEME. The Zn(2+) site is built by C1061, C1064, C1079, and H1082.

The protein belongs to the RNA polymerase beta chain family. Part of the 13-subunit RNA polymerase complex. Zn(2+) is required as a cofactor.

Its subcellular location is the cytoplasm. The catalysed reaction is RNA(n) + a ribonucleoside 5'-triphosphate = RNA(n+1) + diphosphate. Its function is as follows. DNA-dependent RNA polymerase (RNAP) catalyzes the transcription of DNA into RNA using the four ribonucleoside triphosphates as substrates. This subunit is involved in DNA promoter recognition. This is DNA-directed RNA polymerase subunit Rpo2 from Saccharolobus shibatae (strain ATCC 51178 / DSM 5389 / JCM 8931 / NBRC 15437 / B12) (Sulfolobus shibatae).